Consider the following 530-residue polypeptide: Type 2 DNA topoisomerase 6 subunit B (530 aa).

ATP-binding positions include Asn42, Asp76, Ser96–Lys98, Met107–Lys113, and Lys427.

The protein belongs to the TOP6B family. Homodimer. Heterotetramer of two Top6A and two Top6B chains.

It carries out the reaction ATP-dependent breakage, passage and rejoining of double-stranded DNA.. Its activity is regulated as follows. Not inhibited by the DNA gyrase inhibitor novobiocin, instead inhibited by eukaryotic topoisomerase inhibitors such as m- and o-amsacrine, ellipticine, and the quinolone CP-115,953. Radicicol inhibits the ATPase activity. In terms of biological role, relaxes both positive and negative supercoils and exhibits a strong decatenase and unknotting activity; it cannot introduce DNA supercoils. ATP is absolutely required for DNA cleavage; the nonhydrolyzable analog AMP-PNP generates nicked or linear products from a supercoiled dsDNA substrate. Generates staggered two-nucleotide long 5' overhangs. The enzyme is covalently attached transiently to the 5'-ends of the cleaved strands. The polypeptide is Type 2 DNA topoisomerase 6 subunit B (Saccharolobus shibatae (strain ATCC 51178 / DSM 5389 / JCM 8931 / NBRC 15437 / B12) (Sulfolobus shibatae)).